The following is a 1049-amino-acid chain: Tegument protein pp150 (1049 aa).

Disordered regions lie at residues 397–549 (EERQ…DPRF) and 659–945 (PFRM…YPAV). Positions 428–439 (ADEDDDDDDDDE) are enriched in acidic residues. The segment covering 452-462 (SGKGAASGGGV) has biased composition (gly residues). Residues 463–474 (SSIFSGLLSSGS) are compositionally biased toward low complexity. The span at 475-490 (QKPTSGPLNIPQQQQR) shows a compositional bias: polar residues. Residues 509-525 (VRRDSAWDVRPLTETRG) are compositionally biased toward basic and acidic residues. Residues 672–688 (TVSTTPRRPSTPRAAVT) show a composition bias toward low complexity. Over residues 710-722 (PVEDSEEEDDDSS) the composition is skewed to acidic residues. The segment covering 731-743 (GHTTPSSDYNNDV) has biased composition (polar residues). Positions 745 to 757 (SPPSQTPEQSTPS) are enriched in low complexity. Polar residues-rich tracts occupy residues 766–776 (SPMTTTSTSQK), 791–800 (RAQTVTSTPV), and 808–835 (VSGT…SRNV). Low complexity-rich tracts occupy residues 836–855 (TSGA…ASAS), 866–884 (SPAT…SPAK), 912–928 (VVGR…APGR), and 936–945 (ASTTPTYPAV). The O-linked (GlcNAc) serine; by host glycan is linked to S922. O-linked (GlcNAc) serine; by host glycosylation occurs at S953. Residues 1006–1032 (DLSSPQKSGTGPQPGSAGMGGAKTPSD) form a disordered region. Positions 1008–1018 (SSPQKSGTGPQ) are enriched in polar residues.

This sequence belongs to the herpesviridae large structural phosphoprotein family. In terms of assembly, interacts with host BICD1 and RAB6A. Interacts with small capsid protein UL48A; this interaction links together the capsid and pp150. Interacts with host CCNA2. Post-translationally, phosphorylated by host CCNA2.

The protein resides in the virion tegument. Its subcellular location is the host cytoplasm. The protein localises to the host nucleus. Participates in the last steps of viral maturation and release. Associates with nuclear capsids prior to DNA encapsidation and later preserves the integrity of nucleocapsids through secondary envelopment at the assembly compartment. Interacts with host CCNA2 and thereby blocks the onset of lytic gene expression to promote establishment of a quiescent state of infection in undifferentiated cells. The polypeptide is Tegument protein pp150 (UL32) (Homo sapiens (Human)).